Here is a 308-residue protein sequence, read N- to C-terminus: Carbamate kinase (308 aa).

The protein belongs to the carbamate kinase family.

It is found in the cytoplasm. It catalyses the reaction hydrogencarbonate + NH4(+) + ATP = carbamoyl phosphate + ADP + H2O + H(+). The protein is Carbamate kinase of Synechocystis sp. (strain ATCC 27184 / PCC 6803 / Kazusa).